A 633-amino-acid chain; its full sequence is Extracellular metalloproteinase 5 (633 aa).

Positions 1 to 21 are cleaved as a signal peptide; sequence MHGLLLAAAGLLSLPLHVVAH. The propeptide occupies 22–245; that stretch reads PQPSTSLAGR…HNVVDYVSHA (224 aa). A glycan (N-linked (GlcNAc...) asparagine) is linked at asparagine 285. Histidine 428 lines the Zn(2+) pocket. Glutamate 429 is an active-site residue. Histidine 432 is a Zn(2+) binding site. N-linked (GlcNAc...) asparagine glycosylation is found at asparagine 592 and asparagine 621.

It belongs to the peptidase M36 family. The cofactor is Zn(2+).

Its subcellular location is the secreted. In terms of biological role, secreted metalloproteinase probably acting as a virulence factor. This is Extracellular metalloproteinase 5 (MEP5) from Trichophyton rubrum (Athlete's foot fungus).